Here is a 582-residue protein sequence, read N- to C-terminus: DNA mismatch repair protein MutL (582 aa).

The protein belongs to the DNA mismatch repair MutL/HexB family.

This protein is involved in the repair of mismatches in DNA. It is required for dam-dependent methyl-directed DNA mismatch repair. May act as a 'molecular matchmaker', a protein that promotes the formation of a stable complex between two or more DNA-binding proteins in an ATP-dependent manner without itself being part of a final effector complex. The sequence is that of DNA mismatch repair protein MutL from Chlamydia abortus (strain DSM 27085 / S26/3) (Chlamydophila abortus).